Reading from the N-terminus, the 199-residue chain is Holliday junction branch migration complex subunit RuvA (199 aa).

The segment at 1-63 is domain I; that stretch reads MIGCLIGEVF…EDAQQLYGFS (63 aa). The interval 64-142 is domain II; it reads DAQEKTIFRT…TLAQGTSSAA (79 aa). Residues 143–150 are flexible linker; that stretch reads ALPQIQFV. The interval 150–199 is domain III; it reads VSNSPVAEAEAALQSLGYKPLEAQKAVAAVKADYTESADIIRAALKSMMK.

Belongs to the RuvA family. In terms of assembly, homotetramer. Forms an RuvA(8)-RuvB(12)-Holliday junction (HJ) complex. HJ DNA is sandwiched between 2 RuvA tetramers; dsDNA enters through RuvA and exits via RuvB. An RuvB hexamer assembles on each DNA strand where it exits the tetramer. Each RuvB hexamer is contacted by two RuvA subunits (via domain III) on 2 adjacent RuvB subunits; this complex drives branch migration. In the full resolvosome a probable DNA-RuvA(4)-RuvB(12)-RuvC(2) complex forms which resolves the HJ.

It localises to the cytoplasm. Functionally, the RuvA-RuvB-RuvC complex processes Holliday junction (HJ) DNA during genetic recombination and DNA repair, while the RuvA-RuvB complex plays an important role in the rescue of blocked DNA replication forks via replication fork reversal (RFR). RuvA specifically binds to HJ cruciform DNA, conferring on it an open structure. The RuvB hexamer acts as an ATP-dependent pump, pulling dsDNA into and through the RuvAB complex. HJ branch migration allows RuvC to scan DNA until it finds its consensus sequence, where it cleaves and resolves the cruciform DNA. This is Holliday junction branch migration complex subunit RuvA from Acinetobacter baumannii (strain AB307-0294).